The primary structure comprises 622 residues: Phosphomethylpyrimidine synthase (622 aa).

Substrate is bound by residues N226, M255, Y284, H320, 340–342 (SRG), 381–384 (DGLR), and E420. H424 is a binding site for Zn(2+). Y447 is a substrate binding site. H488 provides a ligand contact to Zn(2+). [4Fe-4S] cluster contacts are provided by C568, C571, and C576.

This sequence belongs to the ThiC family. Homodimer. It depends on [4Fe-4S] cluster as a cofactor.

It catalyses the reaction 5-amino-1-(5-phospho-beta-D-ribosyl)imidazole + S-adenosyl-L-methionine = 4-amino-2-methyl-5-(phosphooxymethyl)pyrimidine + CO + 5'-deoxyadenosine + formate + L-methionine + 3 H(+). The protein operates within cofactor biosynthesis; thiamine diphosphate biosynthesis. Catalyzes the synthesis of the hydroxymethylpyrimidine phosphate (HMP-P) moiety of thiamine from aminoimidazole ribotide (AIR) in a radical S-adenosyl-L-methionine (SAM)-dependent reaction. This is Phosphomethylpyrimidine synthase from Ruthia magnifica subsp. Calyptogena magnifica.